The following is a 206-amino-acid chain: Homoserine/homoserine lactone efflux protein (206 aa).

Transmembrane regions (helical) follow at residues 5–25 (WWFAYLLTSTLLSLSPGSGAI), 45–65 (GLQTGLGIHIVLVGVGLGTLF), 68–88 (SLIAFEILKWAGAAYLIWLGI), 117–137 (FVNLTNPKSIVFLAALFPQFI), 148–168 (LILGVTTIVVDMIVMTGYATL), and 182–202 (MKALNKAFGSLFMLVGALLAS).

This sequence belongs to the Rht family.

The protein localises to the cell membrane. Conducts the efflux of homoserine and homoserine lactone. This chain is Homoserine/homoserine lactone efflux protein (rhtB), found in Salmonella typhi.